Reading from the N-terminus, the 194-residue chain is CASP-like protein 2D1 (194 aa).

A compositionally biased stretch (basic and acidic residues) spans 1–16 (MRDNNNNNTREEERSS). The interval 1–26 (MRDNNNNNTREEERSSSSKQQQPQAP) is disordered. At 1–30 (MRDNNNNNTREEERSSSSKQQQPQAPMSLK) the chain is on the cytoplasmic side. Residues 31–51 (IIDSCLRLSVVPLSVATIWLT) traverse the membrane as a helical segment. Over 52–74 (VTNHESNPDYGNLEYNSIMGLKY) the chain is Extracellular. A helical membrane pass occupies residues 75 to 95 (MVGVSAISAIYALLSTVSSWV). At 96–110 (TCLVSKAWLFFIPDQ) the chain is on the cytoplasmic side. The helical transmembrane segment at 111-133 (VLAYVMTTSVAGATEIVYLLNKG) threads the bilayer. The Extracellular portion of the chain corresponds to 134-152 (DKIVTWSEMCSSYPHYCSK). A helical membrane pass occupies residues 153-173 (LTIALGLHVFVLFFFLFLSVI). The Cytoplasmic segment spans residues 174–194 (SAYRAFSPFDPPCDSQTNNDA).

This sequence belongs to the Casparian strip membrane proteins (CASP) family. As to quaternary structure, homodimer and heterodimers.

Its subcellular location is the cell membrane. This is CASP-like protein 2D1 from Arabidopsis thaliana (Mouse-ear cress).